The sequence spans 448 residues: GTPase Der (448 aa).

EngA-type G domains follow at residues 3 to 167 (PVIA…EPPE) and 182 to 355 (TRLA…ASAT). GTP contacts are provided by residues 9–16 (GRPNVGKS), 56–60 (DTGGF), 119–122 (NKAE), 188–195 (GRPNVGKS), 235–239 (DTAGL), and 300–303 (NKWD). The KH-like domain maps to 356 to 440 (RKLPTPQLTR…PMRIELRASH (85 aa)).

It belongs to the TRAFAC class TrmE-Era-EngA-EngB-Septin-like GTPase superfamily. EngA (Der) GTPase family. Associates with the 50S ribosomal subunit.

In terms of biological role, GTPase that plays an essential role in the late steps of ribosome biogenesis. This chain is GTPase Der, found in Leptothrix cholodnii (strain ATCC 51168 / LMG 8142 / SP-6) (Leptothrix discophora (strain SP-6)).